The following is a 51-amino-acid chain: Magnetosome protein Mms5 (51 aa).

The Lumenal segment spans residues 1-12 (MLSAKGVSLGLG). Residues 9–16 (LGLGLGLG) form an LG region region. A helical transmembrane segment spans residues 13 to 33 (LGLGAWGPVLLGVVGVAGAIA). Residues 34 to 51 (LYGYYKNRNAEPAAAEAV) are Cytoplasmic-facing.

It belongs to the magnetosome MamD/Mms5 family. In terms of processing, seen in gels as a band of about 5 kDa, with an N-terminus that corresponds to residue 8, suggesting it may undergo N-terminal cleavage.

Its subcellular location is the magnetosome membrane. Its function is as follows. Might be involved in magnetite crystal growth. The protein is Magnetosome protein Mms5 of Paramagnetospirillum magneticum (strain ATCC 700264 / AMB-1) (Magnetospirillum magneticum).